Here is a 319-residue protein sequence, read N- to C-terminus: Quinolinate synthase (319 aa).

Iminosuccinate contacts are provided by His34 and Ser51. [4Fe-4S] cluster is bound at residue Cys96. Iminosuccinate contacts are provided by residues 122–124 (YIN) and Ser139. Cys182 lines the [4Fe-4S] cluster pocket. Iminosuccinate is bound by residues 208–210 (HPE) and Thr225. Residue Cys276 coordinates [4Fe-4S] cluster.

Belongs to the quinolinate synthase family. Type 2 subfamily. [4Fe-4S] cluster is required as a cofactor.

The protein resides in the cytoplasm. It catalyses the reaction iminosuccinate + dihydroxyacetone phosphate = quinolinate + phosphate + 2 H2O + H(+). Its pathway is cofactor biosynthesis; NAD(+) biosynthesis; quinolinate from iminoaspartate: step 1/1. In terms of biological role, catalyzes the condensation of iminoaspartate with dihydroxyacetone phosphate to form quinolinate. The sequence is that of Quinolinate synthase from Thermosynechococcus vestitus (strain NIES-2133 / IAM M-273 / BP-1).